The chain runs to 131 residues: MRPQQYGGECGMKKKHVILLILILLPVVFLHIMLATWGLSMSFYVKRLSSPPQNYFEITEEDFREIPELKKIFEDLRKLAPGESRSYELDIDTGNKVHSYLTEKQAGVGECSYTYCFKYGDAYYGAHMGTP.

The chain crosses the membrane as a helical span at residues 17–39 (VILLILILLPVVFLHIMLATWGL).

The protein resides in the membrane. This is an uncharacterized protein from Archaeoglobus fulgidus (strain ATCC 49558 / DSM 4304 / JCM 9628 / NBRC 100126 / VC-16).